Reading from the N-terminus, the 626-residue chain is Glutamate--cysteine ligase (626 aa).

Belongs to the glutamate--cysteine ligase type 3 family. In terms of assembly, monomer.

It carries out the reaction L-cysteine + L-glutamate + ATP = gamma-L-glutamyl-L-cysteine + ADP + phosphate + H(+). It functions in the pathway sulfur metabolism; glutathione biosynthesis; glutathione from L-cysteine and L-glutamate: step 1/2. Its function is as follows. An essential enzyme in glutathione (L-gamma-glutamyl-L-cysteinylglycine, GSH) biosynthesis, GSH is essential for growth and differentiation to prespore stage. Catalyzes the condensation of glutamate to cysteine. The chain is Glutamate--cysteine ligase (gcsA) from Dictyostelium discoideum (Social amoeba).